The sequence spans 287 residues: Cell wall protein PIR5 (287 aa).

The signal sequence occupies residues 1–21 (MHYKKAFLASLLSSIALTAYA). Residues 22 to 62 (PPEPWATLTPSSKMDGGTTEYRTSFGLAVIPFTVTESKVKR) constitute a propeptide that is removed on maturation. 4 PIR1/2/3 repeats span residues 62-80 (RNVISQINDGQVQVTTQKL), 81-99 (PHPVSQIGDGQIQVTTQKV), 104-122 (SHIVSQIGDGQLQITTAKN), and 144-162 (ATAVSQIHDGQVQVTISSA).

The protein belongs to the PIR protein family. Covalently linked to beta-1,3-glucan of the inner cell wall layer via an alkali-sensitive ester linkage between the gamma-carboxyl group of glutamic acids, arising from specific glutamines within the PIR1/2/3 repeats, and hydroxyl groups of glucoses of beta-1,3-glucan chains.

The protein resides in the secreted. It localises to the cell wall. In terms of biological role, component of the outer cell wall layer. May be involved in meiosis and sporulation. In Saccharomyces cerevisiae (strain YJM789) (Baker's yeast), this protein is Cell wall protein PIR5 (PIR5).